The following is a 60-amino-acid chain: Large ribosomal subunit protein uL30 (60 aa).

The protein belongs to the universal ribosomal protein uL30 family. Part of the 50S ribosomal subunit.

This chain is Large ribosomal subunit protein uL30, found in Symbiobacterium thermophilum (strain DSM 24528 / JCM 14929 / IAM 14863 / T).